Reading from the N-terminus, the 315-residue chain is Aspartate carbamoyltransferase catalytic subunit (315 aa).

Carbamoyl phosphate contacts are provided by arginine 65 and threonine 66. Residue lysine 93 coordinates L-aspartate. Residues arginine 115, histidine 145, and glutamine 148 each coordinate carbamoyl phosphate. Positions 179 and 234 each coordinate L-aspartate. Residues glycine 275 and proline 276 each coordinate carbamoyl phosphate.

This sequence belongs to the aspartate/ornithine carbamoyltransferase superfamily. ATCase family. In terms of assembly, heterododecamer (2C3:3R2) of six catalytic PyrB chains organized as two trimers (C3), and six regulatory PyrI chains organized as three dimers (R2).

It catalyses the reaction carbamoyl phosphate + L-aspartate = N-carbamoyl-L-aspartate + phosphate + H(+). It functions in the pathway pyrimidine metabolism; UMP biosynthesis via de novo pathway; (S)-dihydroorotate from bicarbonate: step 2/3. In terms of biological role, catalyzes the condensation of carbamoyl phosphate and aspartate to form carbamoyl aspartate and inorganic phosphate, the committed step in the de novo pyrimidine nucleotide biosynthesis pathway. The protein is Aspartate carbamoyltransferase catalytic subunit of Xanthomonas campestris pv. campestris (strain 8004).